The sequence spans 181 residues: Adenine phosphoribosyltransferase (181 aa).

Belongs to the purine/pyrimidine phosphoribosyltransferase family. As to quaternary structure, homodimer.

It is found in the cytoplasm. It catalyses the reaction AMP + diphosphate = 5-phospho-alpha-D-ribose 1-diphosphate + adenine. It functions in the pathway purine metabolism; AMP biosynthesis via salvage pathway; AMP from adenine: step 1/1. Its function is as follows. Catalyzes a salvage reaction resulting in the formation of AMP, that is energically less costly than de novo synthesis. The polypeptide is Adenine phosphoribosyltransferase (Rhizobium leguminosarum bv. trifolii (strain WSM2304)).